Reading from the N-terminus, the 359-residue chain is Peptide chain release factor 1 (359 aa).

Gln-233 is subject to N5-methylglutamine.

It belongs to the prokaryotic/mitochondrial release factor family. Methylated by PrmC. Methylation increases the termination efficiency of RF1.

It is found in the cytoplasm. Functionally, peptide chain release factor 1 directs the termination of translation in response to the peptide chain termination codons UAG and UAA. This Ruminiclostridium cellulolyticum (strain ATCC 35319 / DSM 5812 / JCM 6584 / H10) (Clostridium cellulolyticum) protein is Peptide chain release factor 1.